A 354-amino-acid chain; its full sequence is MSETTDYGASNTGANEESLRMVSSQPIGNEPVSDEELRPHVLGGFIGQPRLKAQLQLFLDAARKRDVPPDHILLAGPPGLGKTTLAMIVANELEVPIRVTSGPAVQHAGDLASILSSLDVGEVLFIDEIHRLPRAAEELLYIAMEDFRVDVMVGKGPGASSIPLTLPRFTVIGATTREGMLPSPLRARFGFTAHLDFYPHEELEKLIERSANVLGVNLDTGSAHELALRSRGTPRIANRLLRRVRDWAIVHDLIVVRPDDVKEALALYQIDSEGLDRLDIAVLNAIVRNFNGGPVGLNNLAAMVGEESETVETVCEPYLVREGFMIRTPKGRVATEKAWQHLGITPKDDVSKLF.

The interval 4–198 is large ATPase domain (RuvB-L); it reads TTDYGASNTG…FGFTAHLDFY (195 aa). Residues Leu-37, Arg-38, Gly-79, Lys-82, Thr-83, Thr-84, 145–147, Arg-188, Tyr-198, and Arg-235 contribute to the ATP site; that span reads EDF. Thr-83 contributes to the Mg(2+) binding site. The small ATPAse domain (RuvB-S) stretch occupies residues 199–269; that stretch reads PHEELEKLIE…DVKEALALYQ (71 aa). Positions 272–354 are head domain (RuvB-H); sequence SEGLDRLDIA…TPKDDVSKLF (83 aa). Arg-327 and Arg-332 together coordinate DNA.

It belongs to the RuvB family. Homohexamer. Forms an RuvA(8)-RuvB(12)-Holliday junction (HJ) complex. HJ DNA is sandwiched between 2 RuvA tetramers; dsDNA enters through RuvA and exits via RuvB. An RuvB hexamer assembles on each DNA strand where it exits the tetramer. Each RuvB hexamer is contacted by two RuvA subunits (via domain III) on 2 adjacent RuvB subunits; this complex drives branch migration. In the full resolvosome a probable DNA-RuvA(4)-RuvB(12)-RuvC(2) complex forms which resolves the HJ.

The protein resides in the cytoplasm. The enzyme catalyses ATP + H2O = ADP + phosphate + H(+). The RuvA-RuvB-RuvC complex processes Holliday junction (HJ) DNA during genetic recombination and DNA repair, while the RuvA-RuvB complex plays an important role in the rescue of blocked DNA replication forks via replication fork reversal (RFR). RuvA specifically binds to HJ cruciform DNA, conferring on it an open structure. The RuvB hexamer acts as an ATP-dependent pump, pulling dsDNA into and through the RuvAB complex. RuvB forms 2 homohexamers on either side of HJ DNA bound by 1 or 2 RuvA tetramers; 4 subunits per hexamer contact DNA at a time. Coordinated motions by a converter formed by DNA-disengaged RuvB subunits stimulates ATP hydrolysis and nucleotide exchange. Immobilization of the converter enables RuvB to convert the ATP-contained energy into a lever motion, pulling 2 nucleotides of DNA out of the RuvA tetramer per ATP hydrolyzed, thus driving DNA branch migration. The RuvB motors rotate together with the DNA substrate, which together with the progressing nucleotide cycle form the mechanistic basis for DNA recombination by continuous HJ branch migration. Branch migration allows RuvC to scan DNA until it finds its consensus sequence, where it cleaves and resolves cruciform DNA. The protein is Holliday junction branch migration complex subunit RuvB of Bifidobacterium longum (strain NCC 2705).